A 492-amino-acid polypeptide reads, in one-letter code: N-succinylglutamate 5-semialdehyde dehydrogenase (492 aa).

220–225 provides a ligand contact to NAD(+); the sequence is GSANTG. Catalysis depends on residues E243 and C277.

The protein belongs to the aldehyde dehydrogenase family. AstD subfamily.

The enzyme catalyses N-succinyl-L-glutamate 5-semialdehyde + NAD(+) + H2O = N-succinyl-L-glutamate + NADH + 2 H(+). It participates in amino-acid degradation; L-arginine degradation via AST pathway; L-glutamate and succinate from L-arginine: step 4/5. In terms of biological role, catalyzes the NAD-dependent reduction of succinylglutamate semialdehyde into succinylglutamate. This chain is N-succinylglutamate 5-semialdehyde dehydrogenase, found in Shigella flexneri.